An 86-amino-acid polypeptide reads, in one-letter code: Large ribosomal subunit protein bL27 (86 aa).

The interval 1 to 23 (MAHKKAGGSTRNGRDSESKRLGV) is disordered.

Belongs to the bacterial ribosomal protein bL27 family.

This Alkalilimnicola ehrlichii (strain ATCC BAA-1101 / DSM 17681 / MLHE-1) protein is Large ribosomal subunit protein bL27.